The following is a 600-amino-acid chain: Proline--tRNA ligase (600 aa).

Belongs to the class-II aminoacyl-tRNA synthetase family. ProS type 1 subfamily. In terms of assembly, homodimer.

Its subcellular location is the cytoplasm. The enzyme catalyses tRNA(Pro) + L-proline + ATP = L-prolyl-tRNA(Pro) + AMP + diphosphate. Its function is as follows. Catalyzes the attachment of proline to tRNA(Pro) in a two-step reaction: proline is first activated by ATP to form Pro-AMP and then transferred to the acceptor end of tRNA(Pro). As ProRS can inadvertently accommodate and process non-cognate amino acids such as alanine and cysteine, to avoid such errors it has two additional distinct editing activities against alanine. One activity is designated as 'pretransfer' editing and involves the tRNA(Pro)-independent hydrolysis of activated Ala-AMP. The other activity is designated 'posttransfer' editing and involves deacylation of mischarged Ala-tRNA(Pro). The misacylated Cys-tRNA(Pro) is not edited by ProRS. The sequence is that of Proline--tRNA ligase from Gloeothece citriformis (strain PCC 7424) (Cyanothece sp. (strain PCC 7424)).